Reading from the N-terminus, the 361-residue chain is Porphobilinogen deaminase (361 aa).

At Ser2 the chain carries N-acetylserine. Position 69 is a phosphoserine (Ser69). The residue at position 74 (Lys74) is an N6-acetyllysine. Residue Ser147 is modified to Phosphoserine. An S-(dipyrrolylmethanemethyl)cysteine modification is found at Cys261.

It belongs to the HMBS family. As to quaternary structure, monomer. Requires dipyrromethane as cofactor.

Its subcellular location is the cytoplasm. The protein resides in the cytosol. The enzyme catalyses 4 porphobilinogen + H2O = hydroxymethylbilane + 4 NH4(+). It participates in porphyrin-containing compound metabolism; protoporphyrin-IX biosynthesis; coproporphyrinogen-III from 5-aminolevulinate: step 2/4. As part of the heme biosynthetic pathway, catalyzes the sequential polymerization of four molecules of porphobilinogen to form hydroxymethylbilane, also known as preuroporphyrinogen. Catalysis begins with the assembly of the dipyrromethane cofactor by the apoenzyme from two molecules of porphobilinogen or from preuroporphyrinogen. The covalently linked cofactor acts as a primer, around which the tetrapyrrole product is assembled. In the last step of catalysis, the product, preuroporphyrinogen, is released, leaving the cofactor bound to the holodeaminase intact. This Mus musculus (Mouse) protein is Porphobilinogen deaminase (Hmbs).